A 348-amino-acid chain; its full sequence is tRNA-specific 2-thiouridylase MnmA (348 aa).

Residues 8–15 (LLSGGVDS) and Met-34 contribute to the ATP site. Cys-105 functions as the Nucleophile in the catalytic mechanism. A disulfide bond links Cys-105 and Cys-197. Gly-129 provides a ligand contact to ATP. Positions 147-149 (KDQ) are interaction with tRNA. The active-site Cysteine persulfide intermediate is the Cys-197.

The protein belongs to the MnmA/TRMU family.

The protein localises to the cytoplasm. It catalyses the reaction S-sulfanyl-L-cysteinyl-[protein] + uridine(34) in tRNA + AH2 + ATP = 2-thiouridine(34) in tRNA + L-cysteinyl-[protein] + A + AMP + diphosphate + H(+). Catalyzes the 2-thiolation of uridine at the wobble position (U34) of tRNA, leading to the formation of s(2)U34. The chain is tRNA-specific 2-thiouridylase MnmA from Fervidobacterium nodosum (strain ATCC 35602 / DSM 5306 / Rt17-B1).